A 338-amino-acid chain; its full sequence is 1-aminocyclopropane-1-carboxylate deaminase (338 aa).

Lys51 is subject to N6-(pyridoxal phosphate)lysine. Ser78 serves as the catalytic Nucleophile.

Belongs to the ACC deaminase/D-cysteine desulfhydrase family. Homotrimer. Pyridoxal 5'-phosphate serves as cofactor.

The catalysed reaction is 1-aminocyclopropane-1-carboxylate + H2O = 2-oxobutanoate + NH4(+). Catalyzes a cyclopropane ring-opening reaction, the irreversible conversion of 1-aminocyclopropane-1-carboxylate (ACC) to ammonia and alpha-ketobutyrate. Allows growth on ACC as a nitrogen source. In Ralstonia pickettii (strain 12J), this protein is 1-aminocyclopropane-1-carboxylate deaminase.